The chain runs to 384 residues: BarH-like 2 homeobox protein (384 aa).

Disordered stretches follow at residues methionine 1 to threonine 134, cysteine 154 to serine 237, and proline 364 to arginine 384. Positions glutamine 119–threonine 134 are enriched in low complexity. A compositionally biased stretch (basic and acidic residues) spans glutamate 177–serine 217. A DNA-binding region (homeobox) is located at residues proline 229–threonine 288.

The protein belongs to the BAR homeobox family. Expressed in the ganglion cell layer of the retina in the eye and in the ventral zone of the dorsal thalamus of the CNS.

The protein localises to the nucleus. Functionally, potential regulator of neural basic helix-loop-helix genes. It may down-regulate expression of ASCL1 and, within the thalamus, up-regulate NGN2, thereby regulating distinct patterns of neuronal differentiation. This is BarH-like 2 homeobox protein (Barhl2) from Rattus norvegicus (Rat).